The primary structure comprises 235 residues: Uridylate kinase (235 aa).

9-12 (KLSG) contributes to the ATP binding site. G51 contacts UMP. The ATP site is built by G52 and R56. Residues D71 and 132 to 139 (TGNPYFTT) each bind UMP. Residues T159, Y165, and D168 each contribute to the ATP site.

Belongs to the UMP kinase family. In terms of assembly, homohexamer.

The protein resides in the cytoplasm. It carries out the reaction UMP + ATP = UDP + ADP. It participates in pyrimidine metabolism; CTP biosynthesis via de novo pathway; UDP from UMP (UMPK route): step 1/1. Its activity is regulated as follows. Inhibited by UTP. In terms of biological role, catalyzes the reversible phosphorylation of UMP to UDP. This Christiangramia forsetii (strain DSM 17595 / CGMCC 1.15422 / KT0803) (Gramella forsetii) protein is Uridylate kinase.